A 278-amino-acid polypeptide reads, in one-letter code: 4-deoxy-L-threo-5-hexosulose-uronate ketol-isomerase (278 aa).

Zn(2+) contacts are provided by H196, H198, E203, and H245.

It belongs to the KduI family. Zn(2+) is required as a cofactor.

The enzyme catalyses 5-dehydro-4-deoxy-D-glucuronate = 3-deoxy-D-glycero-2,5-hexodiulosonate. It functions in the pathway glycan metabolism; pectin degradation; 2-dehydro-3-deoxy-D-gluconate from pectin: step 4/5. Functionally, catalyzes the isomerization of 5-dehydro-4-deoxy-D-glucuronate to 3-deoxy-D-glycero-2,5-hexodiulosonate. The chain is 4-deoxy-L-threo-5-hexosulose-uronate ketol-isomerase from Pectobacterium carotovorum subsp. carotovorum (Erwinia carotovora subsp. carotovora).